A 278-amino-acid polypeptide reads, in one-letter code: Single-strand selective monofunctional uracil-DNA glycosylase (278 aa).

Residues Met-84, Phe-98, and Asn-163 each contribute to the substrate site. A DNA-binding region spans residues 173–187 (SGRNLTPADLPAKHR). His-239 provides a ligand contact to substrate.

This sequence belongs to the uracil-DNA glycosylase (UDG) superfamily. SMUG1 family.

The protein localises to the nucleus. Functionally, recognizes base lesions in the genome and initiates base excision DNA repair. Acts as a monofunctional DNA glycosylase specific for uracil (U) residues in DNA with a preference for single-stranded DNA substrates. The activity is greater toward mismatches (U/G) compared to matches (U/A). Excises uracil (U), 5-formyluracil (fU) and uracil derivatives bearing an oxidized group at C5 [5-hydroxyuracil (hoU) and 5-hydroxymethyluracil (hmU)] in ssDNA and dsDNA, but not analogous cytosine derivatives (5-hydroxycytosine and 5-formylcytosine), nor other oxidized bases. The activity is damage-specific and salt-dependent. The substrate preference is the following: ssDNA &gt; dsDNA (G pair) = dsDNA (A pair) at low salt concentration, and dsDNA (G pair) &gt; dsDNA (A pair) &gt; ssDNA at high salt concentration. The polypeptide is Single-strand selective monofunctional uracil-DNA glycosylase (Smug1) (Rattus norvegicus (Rat)).